We begin with the raw amino-acid sequence, 447 residues long: Voltage-gated purine nucleotide uniporter SLC17A9 (447 aa).

A disordered region spans residues 1 to 26; that stretch reads MPSQRSSLMQPIPEETRKTPSAAAED. Residues 14 to 26 are compositionally biased toward basic and acidic residues; it reads EETRKTPSAAAED. Transmembrane regions (helical) follow at residues 36-58, 74-94, 103-123, 129-149, 169-189, 197-217, 252-272, 287-307, 327-347, 380-400, and 413-433; these read LWTG…MPVC, GIVL…GGHL, VILL…LLAH, LAFV…YFPA, TVGA…SVLL, VFYF…KYLL, VWAV…LLSW, WVFN…SGFI, VMGL…TSFL, GFLF…GVCL, and CVFH…LVFG.

The protein belongs to the major facilitator superfamily. Sodium/anion cotransporter family.

It localises to the cytoplasmic vesicle. The protein localises to the secretory vesicle. The protein resides in the chromaffin granule membrane. It is found in the secretory vesicle membrane. Its subcellular location is the lysosome membrane. It carries out the reaction ATP(in) = ATP(out). The catalysed reaction is ADP(in) = ADP(out). It catalyses the reaction GTP(in) = GTP(out). With respect to regulation, activity is chloride-dependent. Its function is as follows. Voltage-gated ATP nucleotide uniporter that can also transport the purine nucleotides ADP and GTP. Uses the membrane potential as the driving force to control ATP accumulation in lysosomes and secretory vesicles. By controlling ATP storage in lysosomes, regulates ATP-dependent proteins of these organelles. Also indirectly regulates the exocytosis of ATP through its import into lysosomes in astrocytes and secretory vesicles such as adrenal chromaffin granules, mucin granules and synaptic vesicles. The chain is Voltage-gated purine nucleotide uniporter SLC17A9 from Rattus norvegicus (Rat).